A 658-amino-acid chain; its full sequence is Translation factor GUF1, mitochondrial (658 aa).

The transit peptide at 1–40 (MRGCLQTVRWLTSAWQRPRSYSPLSRAAPCRFFNVSIPRN) directs the protein to the mitochondrion. The region spanning 60-240 (DRFRNFCIVA…TVVEQIPAPV (181 aa)) is the tr-type G domain. GTP-binding positions include 69–76 (AHVDHGKS), 133–137 (DTPGH), and 187–190 (NKVD).

This sequence belongs to the TRAFAC class translation factor GTPase superfamily. Classic translation factor GTPase family. LepA subfamily.

The protein resides in the mitochondrion inner membrane. It catalyses the reaction GTP + H2O = GDP + phosphate + H(+). In terms of biological role, promotes mitochondrial protein synthesis. May act as a fidelity factor of the translation reaction, by catalyzing a one-codon backward translocation of tRNAs on improperly translocated ribosomes. Binds to mitochondrial ribosomes in a GTP-dependent manner. The sequence is that of Translation factor GUF1, mitochondrial from Paracoccidioides lutzii (strain ATCC MYA-826 / Pb01) (Paracoccidioides brasiliensis).